The primary structure comprises 347 residues: Protein RecA (347 aa).

An ATP-binding site is contributed by 65–72; the sequence is GPESSGKT. A disordered region spans residues 325 to 347; sequence KLGISDGDVEETEDAPKSLFDEE. Positions 338–347 are enriched in basic and acidic residues; the sequence is DAPKSLFDEE.

This sequence belongs to the RecA family.

The protein localises to the cytoplasm. Can catalyze the hydrolysis of ATP in the presence of single-stranded DNA, the ATP-dependent uptake of single-stranded DNA by duplex DNA, and the ATP-dependent hybridization of homologous single-stranded DNAs. It interacts with LexA causing its activation and leading to its autocatalytic cleavage. The sequence is that of Protein RecA from Staphylococcus aureus (strain Mu3 / ATCC 700698).